Here is a 274-residue protein sequence, read N- to C-terminus: NH(3)-dependent NAD(+) synthetase (274 aa).

G46 to S53 contacts ATP. D52 is a binding site for Mg(2+). R140 serves as a coordination point for deamido-NAD(+). T160 contacts ATP. E165 serves as a coordination point for Mg(2+). Deamido-NAD(+) contacts are provided by K173 and D180. The ATP site is built by K189 and T211. H260 to K261 serves as a coordination point for deamido-NAD(+).

The protein belongs to the NAD synthetase family. As to quaternary structure, homodimer.

It catalyses the reaction deamido-NAD(+) + NH4(+) + ATP = AMP + diphosphate + NAD(+) + H(+). The protein operates within cofactor biosynthesis; NAD(+) biosynthesis; NAD(+) from deamido-NAD(+) (ammonia route): step 1/1. Functionally, catalyzes the ATP-dependent amidation of deamido-NAD to form NAD. Uses ammonia as a nitrogen source. In Lactococcus lactis subsp. cremoris (strain SK11), this protein is NH(3)-dependent NAD(+) synthetase.